Reading from the N-terminus, the 319-residue chain is Beta-ketoacyl-[acyl-carrier-protein] synthase III (319 aa).

Active-site residues include cysteine 110 and histidine 246. The tract at residues 247-251 (QANYR) is ACP-binding. Residue asparagine 276 is part of the active site.

Belongs to the thiolase-like superfamily. FabH family. Homodimer.

It localises to the cytoplasm. The enzyme catalyses malonyl-[ACP] + acetyl-CoA + H(+) = 3-oxobutanoyl-[ACP] + CO2 + CoA. It participates in lipid metabolism; fatty acid biosynthesis. In terms of biological role, catalyzes the condensation reaction of fatty acid synthesis by the addition to an acyl acceptor of two carbons from malonyl-ACP. Catalyzes the first condensation reaction which initiates fatty acid synthesis and may therefore play a role in governing the total rate of fatty acid production. Possesses both acetoacetyl-ACP synthase and acetyl transacylase activities. Its substrate specificity determines the biosynthesis of branched-chain and/or straight-chain of fatty acids. In Lactobacillus delbrueckii subsp. bulgaricus (strain ATCC 11842 / DSM 20081 / BCRC 10696 / JCM 1002 / NBRC 13953 / NCIMB 11778 / NCTC 12712 / WDCM 00102 / Lb 14), this protein is Beta-ketoacyl-[acyl-carrier-protein] synthase III.